The primary structure comprises 150 residues: Large ribosomal subunit protein bL9 (150 aa).

This sequence belongs to the bacterial ribosomal protein bL9 family.

Functionally, binds to the 23S rRNA. The chain is Large ribosomal subunit protein bL9 from Halorhodospira halophila (strain DSM 244 / SL1) (Ectothiorhodospira halophila (strain DSM 244 / SL1)).